The primary structure comprises 230 residues: Ribonuclease 3 (230 aa).

Residues 10–133 (DPRLQSRIGY…IIGAIYVDSN (124 aa)) form the RNase III domain. Glu-46 is a binding site for Mg(2+). Asp-50 is an active-site residue. Residues Asp-119 and Glu-122 each contribute to the Mg(2+) site. Glu-122 is a catalytic residue. Positions 161–230 (DPKSRLQEYL…AAEILKLLEQ (70 aa)) constitute a DRBM domain.

This sequence belongs to the ribonuclease III family. In terms of assembly, homodimer. Requires Mg(2+) as cofactor.

It localises to the cytoplasm. The catalysed reaction is Endonucleolytic cleavage to 5'-phosphomonoester.. Its function is as follows. Digests double-stranded RNA. Involved in the processing of primary rRNA transcript to yield the immediate precursors to the large and small rRNAs (23S and 16S). Processes some mRNAs, and tRNAs when they are encoded in the rRNA operon. Processes pre-crRNA and tracrRNA of type II CRISPR loci if present in the organism. This chain is Ribonuclease 3, found in Acinetobacter baylyi (strain ATCC 33305 / BD413 / ADP1).